The primary structure comprises 229 residues: Large ribosomal subunit protein uL1 (229 aa).

This sequence belongs to the universal ribosomal protein uL1 family. In terms of assembly, part of the 50S ribosomal subunit.

Binds directly to 23S rRNA. The L1 stalk is quite mobile in the ribosome, and is involved in E site tRNA release. Its function is as follows. Protein L1 is also a translational repressor protein, it controls the translation of the L11 operon by binding to its mRNA. The protein is Large ribosomal subunit protein uL1 of Desulforamulus reducens (strain ATCC BAA-1160 / DSM 100696 / MI-1) (Desulfotomaculum reducens).